The primary structure comprises 342 residues: Cell division protein FtsQ (342 aa).

The Cytoplasmic segment spans residues 1–80 (MDGAGSLTRS…ALVERYLPRR (80 aa)). The helical transmembrane segment at 81 to 99 (VGISMTVLLLIGSCGFGIV) threads the bilayer. Residues 100–342 (KGGHLQDFVT…KKKKKAGDAA (243 aa)) are Periplasmic-facing. In terms of domain architecture, POTRA spans 124–192 (FRITSVVING…GQLMIELTER (69 aa)).

This sequence belongs to the FtsQ/DivIB family. FtsQ subfamily.

It localises to the cell inner membrane. Its function is as follows. Essential cell division protein. The protein is Cell division protein FtsQ of Bradyrhizobium diazoefficiens (strain JCM 10833 / BCRC 13528 / IAM 13628 / NBRC 14792 / USDA 110).